We begin with the raw amino-acid sequence, 793 residues long: Neurobeachin (793 aa).

2 disordered regions span residues 68–92 (ENIK…TGAK) and 685–793 (RETA…EILK). 4 stretches are compositionally biased toward polar residues: residues 77–90 (NVST…QTTG), 689–710 (RSGS…STET), 750–762 (NILN…TSTG), and 782–793 (ESLTESPSEILK).

Belongs to the WD repeat neurobeachin family. As to quaternary structure, interacts with RII subunit of PKA. Forebrain and cerebellum.

The protein resides in the cytoplasm. The protein localises to the membrane. In terms of biological role, binds to type II regulatory subunits of protein kinase A and anchors/targets them to the membrane. May anchor the kinase to cytoskeletal and/or organelle-associated proteins. This is Neurobeachin (NBEA) from Gallus gallus (Chicken).